The following is a 355-amino-acid chain: S-adenosylmethionine:tRNA ribosyltransferase-isomerase (355 aa).

The protein belongs to the QueA family. As to quaternary structure, monomer.

It localises to the cytoplasm. The catalysed reaction is 7-aminomethyl-7-carbaguanosine(34) in tRNA + S-adenosyl-L-methionine = epoxyqueuosine(34) in tRNA + adenine + L-methionine + 2 H(+). It functions in the pathway tRNA modification; tRNA-queuosine biosynthesis. Its function is as follows. Transfers and isomerizes the ribose moiety from AdoMet to the 7-aminomethyl group of 7-deazaguanine (preQ1-tRNA) to give epoxyqueuosine (oQ-tRNA). This chain is S-adenosylmethionine:tRNA ribosyltransferase-isomerase, found in Erwinia tasmaniensis (strain DSM 17950 / CFBP 7177 / CIP 109463 / NCPPB 4357 / Et1/99).